Reading from the N-terminus, the 737-residue chain is MSTNPKPQRKTKRNTNRRPQDVKFPGGGQIVGGVYLLPRRGPRLGVRATRKTSERSQPRGRRQPIPKDRRSTGKSWGKPGYPWPLYGNEGLGWAGWLLSPRGSRPSWGPNDPRHRSRNVGKVIDTLTCGFADLMGYIPVVGAPLGGVARALAHGVRVLEDGVNYATGNLPGCSFSIFLLALLSCITVPVSAVQVKNTSNSYMVTNDCSNDSITWQLQGAVLHVPGCVPCEKVGNMSRCWIPVSPNVAVRQPGALTQGLRTHIDMVVVSATLCSALYVGDLCGGVMLAAQMFIVSPQHHWFVQECNCSIYPGAITGHRMAWDMMMNWSPTATMILAYAMRVPEVIIDIISGAHWGVMFGLAYFSMQGAWAKVVVILLLAAGVDANTRTVAGSAAATTRGFTSMFSSGSKQNLQLINTNGSWHINRTALNCNDSLNTGFIASLFYVNRFNSSGCPHRLSVCRSIEAFRIGWGTLQYEDNVTNPEDMRPYCWHYPPKPCGIVPARSVCGPVYCFTPSPVVVGTTDARGVPTYTWGENETDVFLLNSTRPPRGSWFGCTWMNSTGFTKTCGAPPCRIRADFNASTDLLCPTDCFRKHSDATYIKCGSGPWLTPKCMVDYPYRLWHYPCTVNYSIFKIRMYVGGVEHRLTAACNFTRGDPCNLEDRDRSQLSPLLHSTTEWAILPCTYSDLPALSTGLLHLHQNIVDVQYMYGLSPALTKYVVRWEWVVLLFLLLADARVCA.

N-acetylserine; by host is present on serine 2. Positions 2 to 23 (STNPKPQRKTKRNTNRRPQDVK) are interaction with STAT1. The interaction with EIF2AK2/PKR stretch occupies residues 2 to 58 (STNPKPQRKTKRNTNRRPQDVKFPGGGQIVGGVYLLPRRGPRLGVRATRKTSERSQP). Positions 2–59 (STNPKPQRKTKRNTNRRPQDVKFPGGGQIVGGVYLLPRRGPRLGVRATRKTSERSQPR) are interaction with DDX3X. Positions 2-75 (STNPKPQRKT…PKDRRSTGKS (74 aa)) are disordered. Over 2-168 (STNPKPQRKT…EDGVNYATGN (167 aa)) the chain is Cytoplasmic. 2 consecutive short sequence motifs (nuclear localization signal) follow at residues 5–13 (PKPQRKTKR) and 38–43 (PRRGPR). Residues 7-16 (PQRKTKRNTN) are compositionally biased toward basic residues. Low complexity predominate over residues 32-47 (GGVYLLPRRGPRLGVR). Serine 53 bears the Phosphoserine; by host mark. Short sequence motifs (nuclear localization signal) lie at residues 58–64 (PRGRRQP) and 66–71 (PKDRRS). Residues serine 99 and serine 116 each carry the phosphoserine; by host modification. The tract at residues 112 to 152 (PRHRSRNVGKVIDTLTCGFADLMGYIPVVGAPLGGVARALA) is important for endoplasmic reticulum and mitochondrial localization. The segment at 122–173 (VIDTLTCGFADLMGYIPVVGAPLGGVARALAHGVRVLEDGVNYATGNLPGCS) is interaction with APOA2. The interval 164–167 (YATG) is important for lipid droplets localization. A helical membrane pass occupies residues 169 to 189 (LPGCSFSIFLLALLSCITVPV). The propeptide at 178–191 (LLALLSCITVPVSA) is ER anchor for the core protein, removed in mature form by host signal peptidase. The Lumenal segment spans residues 190 to 358 (SAVQVKNTSN…SGAHWGVMFG (169 aa)). N-linked (GlcNAc...) asparagine; by host glycosylation is found at asparagine 196, asparagine 209, and asparagine 234. The important for fusion stretch occupies residues 265 to 296 (VVVSATLCSALYVGDLCGGVMLAAQMFIVSPQ). Asparagine 305 is a glycosylation site (N-linked (GlcNAc...) asparagine; by host). The chain crosses the membrane as a helical span at residues 359–379 (LAYFSMQGAWAKVVVILLLAA). Residues 380-729 (GVDANTRTVA…WEWVVLLFLL (350 aa)) are Lumenal-facing. An HVR1 region spans residues 385 to 411 (TRTVAGSAAATTRGFTSMFSSGSKQNL). N-linked (GlcNAc...) (high mannose) asparagine; by host glycosylation is found at asparagine 417, asparagine 423, asparagine 430, and asparagine 448. 4 disulfide bridges follow: cysteine 429/cysteine 554, cysteine 452/cysteine 459, cysteine 488/cysteine 496, and cysteine 505/cysteine 510. The segment at 474–481 (YEDNVTNP) is HVR2. Residues 482-495 (EDMRPYCWHYPPKP) are CD81-binding 1. Residue asparagine 542 is glycosylated (N-linked (GlcNAc...) asparagine; by host). The tract at residues 546 to 553 (PPRGSWFG) is CD81-binding 2. The N-linked (GlcNAc...) (high mannose) asparagine; by host glycan is linked to asparagine 558. 4 disulfides stabilise this stretch: cysteine 566-cysteine 571, cysteine 585-cysteine 589, cysteine 601-cysteine 624, and cysteine 611-cysteine 648. Asparagine 627 and asparagine 649 each carry an N-linked (GlcNAc...) (high mannose) asparagine; by host glycan. Cysteine 656 and cysteine 681 are disulfide-bonded. Residues 664–675 (SQLSPLLHSTTE) form a PKR/eIF2-alpha phosphorylation homology domain (PePHD) region. The helical transmembrane segment at 730–737 (LADARVCA) threads the bilayer.

The protein belongs to the hepacivirus polyprotein family. As to quaternary structure, homooligomer. Interacts with E1 (via C-terminus). Interacts with the non-structural protein 5A. Interacts (via N-terminus) with host STAT1 (via SH2 domain); this interaction results in decreased STAT1 phosphorylation and ubiquitin-mediated proteasome-dependent STAT1 degradation, leading to decreased IFN-stimulated gene transcription. Interacts with host STAT3; this interaction constitutively activates STAT3. Interacts with host LTBR receptor. Interacts with host TNFRSF1A receptor and possibly induces apoptosis. Interacts with host HNRPK. Interacts with host YWHAE. Interacts with host UBE3A/E6AP. Interacts with host DDX3X. Interacts with host APOA2. Interacts with host RXRA protein. Interacts with host SP110 isoform 3/Sp110b; this interaction sequesters the transcriptional corepressor SP110 away from the nucleus. Interacts with host CREB3 nuclear transcription protein; this interaction triggers cell transformation. Interacts with host ACY3. Interacts with host C1QR1. Interacts with host RBM24; this interaction, which enhances the interaction of the mature core protein with 5'-UTR, may inhibit viral translation and favor replication. Interacts with host EIF2AK2/PKR; this interaction induces the autophosphorylation of EIF2AK2. Part of the viral assembly initiation complex composed of NS2, E1, E2, NS3, NS4A, NS5A and the mature core protein. Forms a heterodimer with envelope glycoprotein E2. Interacts with mature core protein. Interacts with protease NS2. The heterodimer E1/E2 interacts with host CLDN1; this interaction plays a role in viral entry into host cell. Interacts with host SPSB2 (via C-terminus). Part of the viral assembly initiation complex composed of NS2, E1, E2, NS3, NS4A, NS5A and the mature core protein. In terms of assembly, forms a heterodimer with envelope glycoprotein E1. Interacts with host CD81 and SCARB1 receptors; these interactions play a role in viral entry into host cell. Interacts with host EIF2AK2/PKR; this interaction inhibits EIF2AK2 and probably allows the virus to evade the innate immune response. Interacts with host CD209/DC-SIGN and CLEC4M/DC-SIGNR. Interact with host SPCS1; this interaction is essential for viral particle assembly. Interacts with protease NS2. The heterodimer E1/E2 interacts with host CLDN1; this interaction plays a role in viral entry into host cell. Part of the viral assembly initiation complex composed of NS2, E1, E2, NS3, NS4A, NS5A and the mature core protein. Post-translationally, specific enzymatic cleavages in vivo yield mature proteins. The structural proteins, core, E1, E2 and p7 are produced by proteolytic processing by host signal peptidases. The core protein precursor is synthesized as a 23 kDa, which is retained in the ER membrane through the hydrophobic signal peptide. Cleavage by the signal peptidase releases the 21 kDa mature core protein. The cleavage of the core protein precursor occurs between aminoacids 176 and 188 but the exact cleavage site is not known. Some degraded forms of the core protein appear as well during the course of infection. The other proteins (p7, NS2, NS3, NS4A, NS4B, NS5A and NS5B) are cleaved by the viral proteases. Autoprocessing between NS2 and NS3 is mediated by the NS2 cysteine protease catalytic domain and regulated by the NS3 N-terminal domain. Phosphorylated by host PKC and PKA. In terms of processing, ubiquitinated; mediated by UBE3A and leading to core protein subsequent proteasomal degradation. Post-translationally, highly N-glycosylated.

Its subcellular location is the host endoplasmic reticulum membrane. The protein resides in the host mitochondrion membrane. It is found in the virion. The protein localises to the host cytoplasm. It localises to the host nucleus. Its subcellular location is the host lipid droplet. The protein resides in the virion membrane. Its function is as follows. Packages viral RNA to form a viral nucleocapsid, and promotes virion budding. Participates in the viral particle production as a result of its interaction with the non-structural protein 5A. Binds RNA and may function as a RNA chaperone to induce the RNA structural rearrangements taking place during virus replication. Modulates viral translation initiation by interacting with viral IRES and 40S ribosomal subunit. Affects various cell signaling pathways, host immunity and lipid metabolism. Prevents the establishment of cellular antiviral state by blocking the interferon-alpha/beta (IFN-alpha/beta) and IFN-gamma signaling pathways and by blocking the formation of phosphorylated STAT1 and promoting ubiquitin-mediated proteasome-dependent degradation of STAT1. Activates STAT3 leading to cellular transformation. Regulates the activity of cellular genes, including c-myc and c-fos. May repress the promoter of p53, and sequester CREB3 and SP110 isoform 3/Sp110b in the cytoplasm. Represses cell cycle negative regulating factor CDKN1A, thereby interrupting an important check point of normal cell cycle regulation. Targets transcription factors involved in the regulation of inflammatory responses and in the immune response: suppresses TNF-induced NF-kappa-B activation, and activates AP-1. Binds to dendritic cells (DCs) via C1QR1, resulting in down-regulation of T-lymphocytes proliferation. Alters lipid metabolism by interacting with hepatocellular proteins involved in lipid accumulation and storage. Induces up-regulation of FAS promoter activity, and thereby contributes to the increased triglyceride accumulation in hepatocytes (steatosis). Functionally, forms a heterodimer with envelope glycoprotein E2, which mediates virus attachment to the host cell, virion internalization through clathrin-dependent endocytosis and fusion with host membrane. Fusion with the host cell is most likely mediated by both E1 and E2, through conformational rearrangements of the heterodimer required for fusion rather than a classical class II fusion mechanism. E1/E2 heterodimer binds host apolipoproteins such as APOB and ApoE thereby forming a lipo-viro-particle (LVP). APOE associated to the LVP allows the initial virus attachment to cell surface receptors such as the heparan sulfate proteoglycans (HSPGs), syndecan-1 (SDC1), syndecan-1 (SDC2), the low-density lipoprotein receptor (LDLR) and scavenger receptor class B type I (SCARB1). The cholesterol transfer activity of SCARB1 allows E2 exposure and binding of E2 to SCARB1 and the tetraspanin CD81. E1/E2 heterodimer binding on CD81 activates the epithelial growth factor receptor (EGFR) signaling pathway. Diffusion of the complex E1-E2-EGFR-SCARB1-CD81 to the cell lateral membrane allows further interaction with Claudin 1 (CLDN1) and occludin (OCLN) to finally trigger HCV entry. In terms of biological role, forms a heterodimer with envelope glycoprotein E1, which mediates virus attachment to the host cell, virion internalization through clathrin-dependent endocytosis and fusion with host membrane. Fusion with the host cell is most likely mediated by both E1 and E2, through conformational rearrangements of the heterodimer required for fusion rather than a classical class II fusion mechanism. The interaction between envelope glycoprotein E2 and host apolipoprotein E/APOE allows the proper assembly, maturation and infectivity of the viral particles. This interaction is probably promoted via the up-regulation of cellular autophagy by the virus. E1/E2 heterodimer binds host apolipoproteins such as APOB and APOE thereby forming a lipo-viro-particle (LVP). APOE associated to the LVP allows the initial virus attachment to cell surface receptors such as the heparan sulfate proteoglycans (HSPGs), syndecan-1 (SDC1), syndecan-1 (SDC2), the low-density lipoprotein receptor (LDLR) and scavenger receptor class B type I (SCARB1). The cholesterol transfer activity of SCARB1 allows E2 exposure and binding of E2 to SCARB1 and the tetraspanin CD81. E1/E2 heterodimer binding on CD81 activates the epithelial growth factor receptor (EGFR) signaling pathway. Diffusion of the complex E1-E2-EGFR-SCARB1-CD81 to the cell lateral membrane allows further interaction with Claudin 1 (CLDN1) and occludin (OCLN) to finally trigger HCV entry. Inhibits host EIF2AK2/PKR activation, preventing the establishment of an antiviral state. Viral ligand for CD209/DC-SIGN and CLEC4M/DC-SIGNR, which are respectively found on dendritic cells (DCs), and on liver sinusoidal endothelial cells and macrophage-like cells of lymph node sinuses. These interactions allow the capture of circulating HCV particles by these cells and subsequent facilitated transmission to permissive cells such as hepatocytes and lymphocyte subpopulations. In Homo sapiens (Human), this protein is Genome polyprotein.